A 290-amino-acid polypeptide reads, in one-letter code: Cytochrome bo(3) ubiquinol oxidase subunit 2 (290 aa).

Positions 1 to 24 (MISINFNNFFKTLLLILIAFTLHG) are cleaved as a signal peptide. Residue Cys-25 is the site of N-palmitoyl cysteine attachment. Cys-25 carries S-diacylglycerol cysteine lipidation. Over 25–42 (CDSILFNPHGIIAIQECS) the chain is Extracellular. Residues 43 to 63 (ILLISFLIMLFVIIPVIFMTI) form a helical membrane-spanning segment. Topologically, residues 64 to 87 (YFSVKYRASNINAKYKPDWCDSKK) are cytoplasmic. A helical membrane pass occupies residues 88 to 108 (IEIIVWTIPISIILFLAFVTW). The Extracellular segment spans residues 109 to 290 (NYSHILDPKK…TYSKNKVFKH (182 aa)).

Belongs to the cytochrome c oxidase subunit 2 family. Heterooctamer of two A chains, two B chains, two C chains and two D chains.

The protein resides in the cell membrane. Cytochrome bo(3) ubiquinol terminal oxidase is the component of the aerobic respiratory chain of E.coli that predominates when cells are grown at high aeration. Has proton pump activity across the membrane in addition to electron transfer, pumping 2 protons/electron. The chain is Cytochrome bo(3) ubiquinol oxidase subunit 2 (cyoA) from Buchnera aphidicola subsp. Schizaphis graminum (strain Sg).